A 150-amino-acid chain; its full sequence is Pyruvoyl-dependent arginine decarboxylase (150 aa).

A Pyruvic acid (Ser) modification is found at Ser-42.

It belongs to the PdaD family. It depends on pyruvate as a cofactor.

The enzyme catalyses L-arginine + H(+) = agmatine + CO2. In Methanopyrus kandleri (strain AV19 / DSM 6324 / JCM 9639 / NBRC 100938), this protein is Pyruvoyl-dependent arginine decarboxylase.